The sequence spans 133 residues: ATP synthase epsilon chain, chloroplastic (133 aa).

Belongs to the ATPase epsilon chain family. F-type ATPases have 2 components, CF(1) - the catalytic core - and CF(0) - the membrane proton channel. CF(1) has five subunits: alpha(3), beta(3), gamma(1), delta(1), epsilon(1). CF(0) has three main subunits: a, b and c.

The protein resides in the plastid. The protein localises to the chloroplast thylakoid membrane. Its function is as follows. Produces ATP from ADP in the presence of a proton gradient across the membrane. This Solanum lycopersicum (Tomato) protein is ATP synthase epsilon chain, chloroplastic.